The primary structure comprises 308 residues: Methionine synthase (308 aa).

Zn(2+) contacts are provided by His-192, Cys-194, Glu-215, and Cys-282.

The protein belongs to the archaeal MetE family. Zn(2+) is required as a cofactor.

It functions in the pathway amino-acid biosynthesis; L-methionine biosynthesis via de novo pathway. In terms of biological role, catalyzes the transfer of a methyl group to L-homocysteine resulting in methionine formation. Can use methylcobalamin and methylcobinamide as methyl donors, but methylcobalamin is not considered to be the physiological substrate. The polypeptide is Methionine synthase (Methanocaldococcus jannaschii (strain ATCC 43067 / DSM 2661 / JAL-1 / JCM 10045 / NBRC 100440) (Methanococcus jannaschii)).